The chain runs to 280 residues: Bifunctional protein FolD (280 aa).

NADP(+) contacts are provided by residues 165-167 (GRS), Ser190, and Ile231.

The protein belongs to the tetrahydrofolate dehydrogenase/cyclohydrolase family. Homodimer.

The catalysed reaction is (6R)-5,10-methylene-5,6,7,8-tetrahydrofolate + NADP(+) = (6R)-5,10-methenyltetrahydrofolate + NADPH. It catalyses the reaction (6R)-5,10-methenyltetrahydrofolate + H2O = (6R)-10-formyltetrahydrofolate + H(+). The protein operates within one-carbon metabolism; tetrahydrofolate interconversion. Its function is as follows. Catalyzes the oxidation of 5,10-methylenetetrahydrofolate to 5,10-methenyltetrahydrofolate and then the hydrolysis of 5,10-methenyltetrahydrofolate to 10-formyltetrahydrofolate. The polypeptide is Bifunctional protein FolD (Moorella thermoacetica (strain ATCC 39073 / JCM 9320)).